The chain runs to 924 residues: DNA repair and recombination protein RDH54 (924 aa).

Residues 1 to 10 show a composition bias toward basic and acidic residues; that stretch reads MQIPKYENKP. 2 disordered regions span residues 1–21 and 155–183; these read MQIP…GSNK and EALS…NDGG. The span at 168–178 shows a compositional bias: low complexity; it reads TTSTTETVPST. The Helicase ATP-binding domain maps to 299–487; sequence LENDSDISGC…FTIIDFINPG (189 aa). 346 to 353 is a binding site for ATP; the sequence is IPLTGLCK. The DEGH box motif lies at 472 to 475; that stretch reads NDLN. Residue K615 forms a Glycyl lysine isopeptide (Lys-Gly) (interchain with G-Cter in ubiquitin) linkage. A Helicase C-terminal domain is found at 631–790; that stretch reads KLRVLMTLLE…DSEMRNKESS (160 aa).

Belongs to the SNF2/RAD54 helicase family. Interacts with RAD51 and DMC1.

The protein resides in the nucleus. It catalyses the reaction ATP + H2O = ADP + phosphate + H(+). Functionally, involved in the recombinational repair of double-strand breaks (DSB) in DNA during mitosis and meiosis. Has DNA dependent ATPase activity. Promotes D-loop (displacement loop) formation with RAD51 recombinase. Modifies the topology of double-stranded DNA during the D-loop reaction to facilitate the invasion of the homologous duplex molecule by the initiating single-stranded DNA substrate. Required for adaptation from G2/M checkpoint arrest induced by a double strand break, by participating in monitoring the extent of single-stranded DNA produced by resection of DNA ends. This role is distinct from its roles in recombination. Promotes colocalization of RAD51 and DMC1 during meiotic recombination. Involved in crossover interference. In Saccharomyces cerevisiae (strain RM11-1a) (Baker's yeast), this protein is DNA repair and recombination protein RDH54 (RDH54).